A 120-amino-acid chain; its full sequence is ATP-dependent Clp protease adapter protein ClpS (120 aa).

Positions 9 to 32 are disordered; the sequence is LTFNQDHPAEHEDDSSGIAVQESK.

Belongs to the ClpS family. Binds to the N-terminal domain of the chaperone ClpA.

Functionally, involved in the modulation of the specificity of the ClpAP-mediated ATP-dependent protein degradation. In Ectopseudomonas mendocina (strain ymp) (Pseudomonas mendocina), this protein is ATP-dependent Clp protease adapter protein ClpS.